Reading from the N-terminus, the 525-residue chain is Probable malate:quinone oxidoreductase (525 aa).

It belongs to the MQO family. Requires FAD as cofactor.

The enzyme catalyses (S)-malate + a quinone = a quinol + oxaloacetate. It functions in the pathway carbohydrate metabolism; tricarboxylic acid cycle; oxaloacetate from (S)-malate (quinone route): step 1/1. In Serratia proteamaculans (strain 568), this protein is Probable malate:quinone oxidoreductase.